Reading from the N-terminus, the 637-residue chain is 1-deoxy-D-xylulose-5-phosphate synthase (637 aa).

Residues H71 and 112–114 contribute to the thiamine diphosphate site; that span reads SHA. A Mg(2+)-binding site is contributed by D144. Residues 145–146, N173, Y284, and E365 each bind thiamine diphosphate; that span reads GA. N173 is a Mg(2+) binding site.

Belongs to the transketolase family. DXPS subfamily. As to quaternary structure, homodimer. It depends on Mg(2+) as a cofactor. Thiamine diphosphate is required as a cofactor.

It carries out the reaction D-glyceraldehyde 3-phosphate + pyruvate + H(+) = 1-deoxy-D-xylulose 5-phosphate + CO2. It participates in metabolic intermediate biosynthesis; 1-deoxy-D-xylulose 5-phosphate biosynthesis; 1-deoxy-D-xylulose 5-phosphate from D-glyceraldehyde 3-phosphate and pyruvate: step 1/1. Functionally, catalyzes the acyloin condensation reaction between C atoms 2 and 3 of pyruvate and glyceraldehyde 3-phosphate to yield 1-deoxy-D-xylulose-5-phosphate (DXP). This chain is 1-deoxy-D-xylulose-5-phosphate synthase, found in Mycolicibacterium gilvum (strain PYR-GCK) (Mycobacterium gilvum (strain PYR-GCK)).